A 195-amino-acid polypeptide reads, in one-letter code: Elongation factor P (195 aa).

The protein belongs to the elongation factor P family.

It localises to the cytoplasm. It participates in protein biosynthesis; polypeptide chain elongation. Its function is as follows. Involved in peptide bond synthesis. Stimulates efficient translation and peptide-bond synthesis on native or reconstituted 70S ribosomes in vitro. Probably functions indirectly by altering the affinity of the ribosome for aminoacyl-tRNA, thus increasing their reactivity as acceptors for peptidyl transferase. This is Elongation factor P from Rhodopirellula baltica (strain DSM 10527 / NCIMB 13988 / SH1).